We begin with the raw amino-acid sequence, 198 residues long: Charged multivesicular body protein 1a (198 aa).

2 coiled-coil regions span residues 7–41 and 176–198; these read QLKFTSKQLERLAKKAEKDSKSEQAKVKKALQQKN and GETSARAQEKEDQLSRRLAALRN. The disordered stretch occupies residues 171 to 198; it reads GASALGETSARAQEKEDQLSRRLAALRN. The MIT-interacting motif signature appears at 187-197; sequence DQLSRRLAALR.

It belongs to the SNF7 family. As to quaternary structure, probable peripherally associated component of the endosomal sorting required for transport complex III (ESCRT-III).

The protein resides in the cytoplasm. The protein localises to the endosome membrane. Its function is as follows. Probable peripherally associated component of the endosomal sorting required for transport complex III (ESCRT-III) which is involved in multivesicular bodies (MVBs) formation and sorting of endosomal cargo proteins into MVBs. MVBs contain intraluminal vesicles (ILVs) that are generated by invagination and scission from the limiting membrane of the endosome and mostly are delivered to lysosomes enabling degradation of membrane proteins, such as stimulated growth factor receptors, lysosomal enzymes and lipids. The sequence is that of Charged multivesicular body protein 1a (chmp1a) from Danio rerio (Zebrafish).